The chain runs to 482 residues: MMETMPNWLKQRAFLTPDRTAIEIEEEKVTFMQLHEKVVSVCEHLTHVGVNRGQKVAVLMKNGMEMITVIHALSYVGAVAVLLNTRLSREELLWQMDDAEVICLVTDQDFEAKDIPVYSFAEVMNGPKEEASIQEEFSLREAMTIIYTSGTTGKPKGVILTYGNHWASAVGSSLNLGLRDDDCWLACMPMFHVGGLSLLMKNIMYGMRILLVPKYDADFIHKALQTRGVTIISVVSKMLTDLLERLGEGTYPSSFRCMLLGGGPAPKPLLETCVDKGIPVYQTYGMTETSSQICTLSADYMLTKVGSAGKPLFQCQLRIEKDGVVVPPFAEGEIVVKGPNVTGGYFNREDATRETIQNGWLHTGDLGYLDEEGFLYVLDRRSDLIISGGENIYPAQIEEVLLSHPMVAEAGVVGMTDDKWGQVPAAFVVKSGEITEEEILHFCEEKLAKYKVPKKACFLEELPRNASKKLLRRELRQLVEEM.

The protein belongs to the ATP-dependent AMP-binding enzyme family. MenE subfamily.

It carries out the reaction 2-succinylbenzoate + ATP + CoA = 2-succinylbenzoyl-CoA + AMP + diphosphate. The protein operates within quinol/quinone metabolism; 1,4-dihydroxy-2-naphthoate biosynthesis; 1,4-dihydroxy-2-naphthoate from chorismate: step 5/7. Its pathway is quinol/quinone metabolism; menaquinone biosynthesis. Its function is as follows. Converts 2-succinylbenzoate (OSB) to 2-succinylbenzoyl-CoA (OSB-CoA). This Bacillus anthracis (strain A0248) protein is 2-succinylbenzoate--CoA ligase.